A 352-amino-acid polypeptide reads, in one-letter code: Protein-glutamate methylesterase/protein-glutamine glutaminase 2 (352 aa).

Residues 6-124 (KVLIVEDSLV…NAGYDTMAAK (119 aa)) enclose the Response regulatory domain. Residue D57 is modified to 4-aspartylphosphate. Residues 162-343 (PGTYSMVGIV…LPLPAIAARL (182 aa)) form the CheB-type methylesterase domain. Residues S173, H200, and D292 contribute to the active site.

It belongs to the CheB family. Post-translationally, phosphorylated by CheA. Phosphorylation of the N-terminal regulatory domain activates the methylesterase activity.

The protein localises to the cytoplasm. The enzyme catalyses [protein]-L-glutamate 5-O-methyl ester + H2O = L-glutamyl-[protein] + methanol + H(+). It carries out the reaction L-glutaminyl-[protein] + H2O = L-glutamyl-[protein] + NH4(+). In terms of biological role, involved in chemotaxis. Part of a chemotaxis signal transduction system that modulates chemotaxis in response to various stimuli. Catalyzes the demethylation of specific methylglutamate residues introduced into the chemoreceptors (methyl-accepting chemotaxis proteins or MCP) by CheR. Also mediates the irreversible deamidation of specific glutamine residues to glutamic acid. The chain is Protein-glutamate methylesterase/protein-glutamine glutaminase 2 from Paramagnetospirillum magneticum (strain ATCC 700264 / AMB-1) (Magnetospirillum magneticum).